The primary structure comprises 444 residues: Serine/threonine-protein kinase 2 (444 aa).

The region spanning 87–444 (NRDFYHLSTG…WIDGKSTSHQ (358 aa)) is the Protein kinase domain. ATP is bound by residues 93-101 (LSTGGYGII) and lysine 118. Aspartate 307 functions as the Proton acceptor in the catalytic mechanism.

This sequence belongs to the protein kinase superfamily. Ser/Thr protein kinase family. Poxviruses subfamily. In terms of processing, phosphorylated in vivo. Autophosphorylated in vitro.

The protein localises to the host endoplasmic reticulum. It localises to the host endoplasmic reticulum-Golgi intermediate compartment. The enzyme catalyses L-seryl-[protein] + ATP = O-phospho-L-seryl-[protein] + ADP + H(+). It catalyses the reaction L-threonyl-[protein] + ATP = O-phospho-L-threonyl-[protein] + ADP + H(+). Functionally, essential serine-protein kinase involved in the early stage of virion morphogenesis. The sequence is that of Serine/threonine-protein kinase 2 (OPG054) from Vertebrata (FPV).